Here is a 102-residue protein sequence, read N- to C-terminus: Large ribosomal subunit protein bL21 (102 aa).

It belongs to the bacterial ribosomal protein bL21 family. In terms of assembly, part of the 50S ribosomal subunit. Contacts protein L20.

Functionally, this protein binds to 23S rRNA in the presence of protein L20. This chain is Large ribosomal subunit protein bL21, found in Ligilactobacillus salivarius (strain UCC118) (Lactobacillus salivarius).